The following is a 546-amino-acid chain: Chaperonin GroEL (546 aa).

ATP-binding positions include 29-32 (TMGP), Lys-50, 86-90 (DGTTT), Gly-414, and Asp-492.

It belongs to the chaperonin (HSP60) family. Forms a cylinder of 14 subunits composed of two heptameric rings stacked back-to-back. Interacts with the co-chaperonin GroES.

Its subcellular location is the cytoplasm. It catalyses the reaction ATP + H2O + a folded polypeptide = ADP + phosphate + an unfolded polypeptide.. Together with its co-chaperonin GroES, plays an essential role in assisting protein folding. The GroEL-GroES system forms a nano-cage that allows encapsulation of the non-native substrate proteins and provides a physical environment optimized to promote and accelerate protein folding. This is Chaperonin GroEL from Helicobacter pylori (strain P12).